A 156-amino-acid polypeptide reads, in one-letter code: MARKRNENSLAENRKARHDYFVEEAMEAGLVLVGTEVKSIRNGRVNLKDCYADIYNGEIFVKNMHISPYEQGNIFNVDPLRERKLLLHRDEIRRLDGLVSRDGYTLIPLSLYLKDGKVKVALGVCKGKKNYDKRDSMLEKAHKRDMDRAIKEKNKY.

Belongs to the SmpB family.

It localises to the cytoplasm. Required for rescue of stalled ribosomes mediated by trans-translation. Binds to transfer-messenger RNA (tmRNA), required for stable association of tmRNA with ribosomes. tmRNA and SmpB together mimic tRNA shape, replacing the anticodon stem-loop with SmpB. tmRNA is encoded by the ssrA gene; the 2 termini fold to resemble tRNA(Ala) and it encodes a 'tag peptide', a short internal open reading frame. During trans-translation Ala-aminoacylated tmRNA acts like a tRNA, entering the A-site of stalled ribosomes, displacing the stalled mRNA. The ribosome then switches to translate the ORF on the tmRNA; the nascent peptide is terminated with the 'tag peptide' encoded by the tmRNA and targeted for degradation. The ribosome is freed to recommence translation, which seems to be the essential function of trans-translation. The chain is SsrA-binding protein from Clostridium beijerinckii (strain ATCC 51743 / NCIMB 8052) (Clostridium acetobutylicum).